Consider the following 508-residue polypeptide: MEELQRYLKMDRSRERDFLYPLIFQEYIYVLAHDFGLTKSIPYESMQILSYDNKYSSLIVKRLIIRMYQQKHFLILDNDSNQKKFLGHNKNLYSQMISEGFAVIVEIPFALRLVSSYQGKEIKKSINLRSIHSTFPFLEDKFVHLNHVLDILIPYPIHLELLVQNLRCWIQDASFLHLLRFFLYEYHNWNSLTTQKTKQNSLFLKENRRFFLFLYNFHVYESESIFLFLRKKSYHLRSTSSIAFLDRRRFYGKIEHFKVVFHNDFHTILWLFKDPFMHYFRYQGKSIMSSKGTLLLMKKWKYYLVNLWECHFDFWSQPNRIHINQLSNRFLDFLGYLSGVRPNPSVVRNQMLENAFIIDIAINKLDTIVPIIPLIGSLAKAKFCNLSGQPVSKPAWTDSPDSDIMDRFGRICRNVSHYYSGSSKKKTLYRIKYIFRLSCARTLARKHKSTVRSFLKRLGSEFLEEFLIEEEEVLSFILPKISSSSQRLSKERIWYFDIIRINDLMDLS.

The protein belongs to the intron maturase 2 family. MatK subfamily.

The protein resides in the plastid. The protein localises to the chloroplast. Usually encoded in the trnK tRNA gene intron. Probably assists in splicing its own and other chloroplast group II introns. This chain is Maturase K, found in Ranunculus lingua (Greater spearwort).